We begin with the raw amino-acid sequence, 441 residues long: Signal recognition particle 54 kDa protein (441 aa).

GTP is bound by residues Gly104–Thr111, Asp186–Arg190, and Thr244–Asp247.

This sequence belongs to the GTP-binding SRP family. SRP54 subfamily. Part of the signal recognition particle protein translocation system, which is composed of SRP and FtsY. Archaeal SRP consists of a 7S RNA molecule of 300 nucleotides and two protein subunits: SRP54 and SRP19.

The protein localises to the cytoplasm. The catalysed reaction is GTP + H2O = GDP + phosphate + H(+). Involved in targeting and insertion of nascent membrane proteins into the cytoplasmic membrane. Binds to the hydrophobic signal sequence of the ribosome-nascent chain (RNC) as it emerges from the ribosomes. The SRP-RNC complex is then targeted to the cytoplasmic membrane where it interacts with the SRP receptor FtsY. This chain is Signal recognition particle 54 kDa protein, found in Staphylothermus marinus (strain ATCC 43588 / DSM 3639 / JCM 9404 / F1).